We begin with the raw amino-acid sequence, 119 residues long: Large ribosomal subunit protein bL20c (119 aa).

The protein belongs to the bacterial ribosomal protein bL20 family.

It localises to the plastid. The protein resides in the chloroplast. Its function is as follows. Binds directly to 23S ribosomal RNA and is necessary for the in vitro assembly process of the 50S ribosomal subunit. It is not involved in the protein synthesizing functions of that subunit. In Triticum aestivum (Wheat), this protein is Large ribosomal subunit protein bL20c.